The sequence spans 391 residues: Mannose-6-phosphate isomerase (391 aa).

Glutamine 97, histidine 99, glutamate 134, and histidine 255 together coordinate Zn(2+). Residue arginine 274 is part of the active site. Lysine 280 is subject to N6-acetyllysine.

Belongs to the mannose-6-phosphate isomerase type 1 family. Zn(2+) is required as a cofactor.

It localises to the cytoplasm. It carries out the reaction D-mannose 6-phosphate = D-fructose 6-phosphate. Its function is as follows. Involved in the conversion of glucose to GDP-L-fucose, which can be converted to L-fucose, a capsular polysaccharide. This is Mannose-6-phosphate isomerase (manA) from Shigella flexneri.